The following is a 156-amino-acid chain: MSTELTVQSERAFQKQPHIFNNPKVKTSKRTKRWYKNAGLGFKTPKTAIEGSYIDKKCPFTGLVSIRGKILTGTVVSTKMHRTIVIRRAYLHYIPKYNRYEKRHKNVPVHVSPAFRVQVGDIVTVGQCRPISKTVRFNVVKVSAAAGKANKQFAKF.

An N-acetylserine modification is found at serine 2. Glycyl lysine isopeptide (Lys-Gly) (interchain with G-Cter in ubiquitin) cross-links involve residues lysine 15, lysine 46, lysine 56, lysine 57, lysine 79, lysine 96, lysine 105, lysine 133, lysine 141, and lysine 148.

This sequence belongs to the universal ribosomal protein uS17 family. In terms of assembly, component of the small ribosomal subunit (SSU). Mature yeast ribosomes consist of a small (40S) and a large (60S) subunit. The 40S small subunit contains 1 molecule of ribosomal RNA (18S rRNA) and 33 different proteins (encoded by 57 genes). The large 60S subunit contains 3 rRNA molecules (25S, 5.8S and 5S rRNA) and 46 different proteins (encoded by 81 genes). Post-translationally, N-terminally acetylated by acetyltransferase NatA.

Its subcellular location is the cytoplasm. Functionally, component of the ribosome, a large ribonucleoprotein complex responsible for the synthesis of proteins in the cell. The small ribosomal subunit (SSU) binds messenger RNAs (mRNAs) and translates the encoded message by selecting cognate aminoacyl-transfer RNA (tRNA) molecules. The large subunit (LSU) contains the ribosomal catalytic site termed the peptidyl transferase center (PTC), which catalyzes the formation of peptide bonds, thereby polymerizing the amino acids delivered by tRNAs into a polypeptide chain. The nascent polypeptides leave the ribosome through a tunnel in the LSU and interact with protein factors that function in enzymatic processing, targeting, and the membrane insertion of nascent chains at the exit of the ribosomal tunnel. The sequence is that of Small ribosomal subunit protein uS17A from Saccharomyces cerevisiae (strain ATCC 204508 / S288c) (Baker's yeast).